Here is a 164-residue protein sequence, read N- to C-terminus: Mineralocorticoid receptor (164 aa).

The NR LBD domain occupies 1-162 (QYSWMCLSSF…EFPRCWWRSS (162 aa)). Residues Arg15 and Thr143 each coordinate 21-hydroxyprogesterone. Arg15 and Thr143 together coordinate aldosterone. The progesterone site is built by Arg15 and Thr143.

This sequence belongs to the nuclear hormone receptor family. NR3 subfamily. As to quaternary structure, heteromultimeric cytoplasmic complex with HSP90, HSP70, and FKBP4, in the absence of ligand. After ligand binding, it translocates to the nucleus and binds to DNA as a homodimer and as a heterodimer with NR3C1. Binds the coactivator NCOA2. May interact with HSD11B2 in the absence of ligand. Binds the coactivators NCOA1, TIF1 and NRIP1. In terms of processing, phosphorylated.

Its subcellular location is the cytoplasm. It is found in the nucleus. The protein resides in the endoplasmic reticulum membrane. Functionally, receptor for both mineralocorticoids (MC) such as aldosterone and glucocorticoids (GC) such as corticosterone or cortisol. Binds to mineralocorticoid response elements (MRE) and transactivates target genes. The effect of MC is to increase ion and water transport and thus raise extracellular fluid volume and blood pressure and lower potassium levels. The sequence is that of Mineralocorticoid receptor (NR3C2) from Sus scrofa (Pig).